A 351-amino-acid polypeptide reads, in one-letter code: Putative [LysW]-L-2-aminoadipate/[LysW]-L-glutamate phosphate reductase (351 aa).

NADP(+) is bound by residues 9–12 and 33–35; these read SGFV and SRR. Cysteine 150 is a catalytic residue. Asparagine 318 contributes to the NADP(+) binding site.

This sequence belongs to the NAGSA dehydrogenase family. Type 1 subfamily. LysY sub-subfamily.

Its subcellular location is the cytoplasm. The catalysed reaction is [amino-group carrier protein]-C-terminal-N-(1-carboxy-5-oxopentan-1-yl)-L-glutamine + phosphate + NADP(+) = [amino-group carrier protein]-C-terminal-N-(1-carboxy-5-phosphooxy-5-oxopentan-1-yl)-L-glutamine + NADPH + H(+). It carries out the reaction [amino-group carrier protein]-C-terminal-gamma-(L-glutamyl-5-semialdehyde)-L-glutamate + phosphate + NADP(+) = [amino-group carrier protein]-C-terminal-gamma-(5-phospho-L-glutamyl)-L-glutamate + NADPH + H(+). It participates in amino-acid biosynthesis; L-lysine biosynthesis via AAA pathway; L-lysine from L-alpha-aminoadipate (Thermus route): step 3/5. Its pathway is amino-acid biosynthesis; L-arginine biosynthesis. Its function is as follows. Involved in both the arginine and lysine biosynthetic pathways. This is Putative [LysW]-L-2-aminoadipate/[LysW]-L-glutamate phosphate reductase from Pyrobaculum aerophilum (strain ATCC 51768 / DSM 7523 / JCM 9630 / CIP 104966 / NBRC 100827 / IM2).